The sequence spans 215 residues: Protein ERP2 (215 aa).

Positions 1 to 25 (MIKSTIALPSFFIVLILALVNSVAA) are cleaved as a signal peptide. Topologically, residues 26–182 (SSSYAPVAIS…TVNSTESRLT (157 aa)) are lumenal. One can recognise a GOLD domain in the interval 41–123 (KECLYYDMVT…LKKVEITLEK (83 aa)). The helical transmembrane segment at 183–203 (WLSILIIIIIAVISIAQVLLI) threads the bilayer. Residues 204 to 215 (QFLFTGRQKNYV) are Cytoplasmic-facing.

This sequence belongs to the EMP24/GP25L family. Associates with EMP24, ERV25 and ERP1.

Its subcellular location is the endoplasmic reticulum membrane. Involved in vesicular protein trafficking. In Saccharomyces cerevisiae (strain ATCC 204508 / S288c) (Baker's yeast), this protein is Protein ERP2 (ERP2).